Consider the following 100-residue polypeptide: Integration host factor subunit alpha (100 aa).

It belongs to the bacterial histone-like protein family. As to quaternary structure, heterodimer of an alpha and a beta chain.

Functionally, this protein is one of the two subunits of integration host factor, a specific DNA-binding protein that functions in genetic recombination as well as in transcriptional and translational control. The sequence is that of Integration host factor subunit alpha from Erythrobacter litoralis (strain HTCC2594).